Consider the following 371-residue polypeptide: Deoxyuridine 5'-triphosphate nucleotidohydrolase (371 aa).

Residues 260-262 (RSS) and 366-367 (FG) each bind substrate. Residues 350 to 371 (NEFDAEAPPSERGTGGFGSTGI) are disordered. The segment covering 362 to 371 (GTGGFGSTGI) has biased composition (gly residues).

It belongs to the dUTPase family. It depends on Mg(2+) as a cofactor.

It catalyses the reaction dUTP + H2O = dUMP + diphosphate + H(+). Involved in nucleotide metabolism: produces dUMP, the immediate precursor of thymidine nucleotides and decreases the intracellular concentration of dUTP to avoid uracil incorporation into viral DNA. This chain is Deoxyuridine 5'-triphosphate nucleotidohydrolase, found in Homo sapiens (Human).